A 530-amino-acid chain; its full sequence is Autoinducer-2 kinase (530 aa).

The protein belongs to the FGGY kinase family.

The protein localises to the cytoplasm. The enzyme catalyses (S)-4,5-dihydroxypentane-2,3-dione + ATP = (2S)-2-hydroxy-3,4-dioxopentyl phosphate + ADP + H(+). Its function is as follows. Catalyzes the phosphorylation of autoinducer-2 (AI-2) to phospho-AI-2, which subsequently inactivates the transcriptional regulator LsrR and leads to the transcription of the lsr operon. Phosphorylates the ring-open form of (S)-4,5-dihydroxypentane-2,3-dione (DPD), which is the precursor to all AI-2 signaling molecules, at the C5 position. The sequence is that of Autoinducer-2 kinase from Salmonella choleraesuis (strain SC-B67).